We begin with the raw amino-acid sequence, 209 residues long: dITP/XTP pyrophosphatase (209 aa).

Position 7–12 (7–12 (TGNKGK)) interacts with substrate. Residue D73 is the Proton acceptor of the active site. Residue D73 coordinates Mg(2+). Substrate contacts are provided by residues S74, 155 to 158 (FGYD), K178, and 183 to 184 (HR).

It belongs to the HAM1 NTPase family. As to quaternary structure, homodimer. Mg(2+) is required as a cofactor.

It carries out the reaction XTP + H2O = XMP + diphosphate + H(+). It catalyses the reaction dITP + H2O = dIMP + diphosphate + H(+). The enzyme catalyses ITP + H2O = IMP + diphosphate + H(+). Functionally, pyrophosphatase that catalyzes the hydrolysis of nucleoside triphosphates to their monophosphate derivatives, with a high preference for the non-canonical purine nucleotides XTP (xanthosine triphosphate), dITP (deoxyinosine triphosphate) and ITP. Seems to function as a house-cleaning enzyme that removes non-canonical purine nucleotides from the nucleotide pool, thus preventing their incorporation into DNA/RNA and avoiding chromosomal lesions. The protein is dITP/XTP pyrophosphatase of Sulfurovum sp. (strain NBC37-1).